The following is a 416-amino-acid chain: Homogentisate 1,2-dioxygenase (416 aa).

The Proton acceptor role is filled by His-275. His-318 and Glu-324 together coordinate Fe cation. Residues Tyr-333 and His-354 each contribute to the homogentisate site. His-354 lines the Fe cation pocket.

The protein belongs to the homogentisate dioxygenase family. As to quaternary structure, hexamer; dimer of trimers. The cofactor is Fe cation.

It carries out the reaction homogentisate + O2 = 4-maleylacetoacetate + H(+). Its pathway is amino-acid degradation; L-phenylalanine degradation; acetoacetate and fumarate from L-phenylalanine: step 4/6. Involved in the catabolism of homogentisate (2,5-dihydroxyphenylacetate or 2,5-OH-PhAc), a central intermediate in the degradation of phenylalanine and tyrosine. Catalyzes the oxidative ring cleavage of the aromatic ring of homogentisate to yield maleylacetoacetate. This Legionella pneumophila subsp. pneumophila (strain Philadelphia 1 / ATCC 33152 / DSM 7513) protein is Homogentisate 1,2-dioxygenase.